The following is a 48-amino-acid chain: Delta-stichotoxin-Hcr1e (48 aa).

Cystine bridges form between C3/C43, C5/C33, and C26/C44.

This sequence belongs to the sea anemone sodium channel inhibitory toxin family. Type II subfamily.

The protein localises to the secreted. It localises to the nematocyst. Its function is as follows. Binds to site 3 of voltage-gated sodium channels and inhibits the inactivation process. In Radianthus crispa (Leathery sea anemone), this protein is Delta-stichotoxin-Hcr1e.